The primary structure comprises 132 residues: Binder of sperm protein homolog 1 (132 aa).

The first 17 residues, 1–17 (MGSLMLLFVETTRNSSA), serve as a signal peptide directing secretion. Fibronectin type-II domains follow at residues 40 to 84 (VTDG…FCSA) and 85 to 132 (EDFA…KYCE). 4 cysteine pairs are disulfide-bonded: cysteine 45–cysteine 69, cysteine 59–cysteine 82, cysteine 90–cysteine 116, and cysteine 104–cysteine 131. Asparagine 53 is a glycosylation site (N-linked (GlcNAc...) asparagine).

Belongs to the seminal plasma protein family. As to expression, expressed only in the epididymis.

The protein resides in the secreted. Functionally, binds sperm in vitro and promotes sperm capacitation. Specifically promotes capacitation induced by high density lipoproteins (HDLs). Also binds heparin, phospholipid liposomes, and weakly to gelatin. Does not bind chondroitin sulfate B. The protein is Binder of sperm protein homolog 1 (BSPH1) of Homo sapiens (Human).